The sequence spans 778 residues: Kin of IRRE-like protein 3 (778 aa).

The first 21 residues, 1–21 (MKPFQLDLLFVCFFLFSQELG), serve as a signal peptide directing secretion. Topologically, residues 22–535 (LQKRGCCLVL…GLEAESVPMA (514 aa)) are extracellular. 5 Ig-like C2-type domains span residues 48–142 (YSFS…ARLT), 147–243 (PDDP…TSVT), 249–330 (PPLV…RTVD), 335–415 (PRMT…VTLT), and 419–515 (PPII…IRLK). The cysteines at positions 69 and 127 are disulfide-linked. Asn-167 carries an N-linked (GlcNAc...) asparagine glycan. A disulfide bridge connects residues Cys-170 and Cys-227. Residue Asn-253 is glycosylated (N-linked (GlcNAc...) asparagine). Cys-271 and Cys-314 are disulfide-bonded. Asn-324 carries N-linked (GlcNAc...) asparagine glycosylation. 2 cysteine pairs are disulfide-bonded: Cys-356/Cys-398 and Cys-440/Cys-499. N-linked (GlcNAc...) asparagine glycosylation occurs at Asn-498. Residues 536 to 556 (VIIGVAVGAGVAFLVLMATIV) traverse the membrane as a helical segment. Residues 557–778 (AFCCARSQRN…PLQRRMQTHV (222 aa)) are Cytoplasmic-facing. Residues 727 to 736 (CDSSVSSSGK) are compositionally biased toward polar residues. A disordered region spans residues 727–778 (CDSSVSSSGKQDGYVQFDKASKASASSSHHSQSSSQNSDPSRPLQRRMQTHV). Residues 748–762 (KASASSSHHSQSSSQ) are compositionally biased toward low complexity.

It belongs to the immunoglobulin superfamily. In terms of assembly, homodimer; mediates homophilic interactions to promote cell adhesion. Interacts with NPHS1; forms heterodimers with NPHS1. Interacts with NPHS2/podocin (via the C-terminus). Interacts with CASK. Interacts (via extracellular region) with MAP1B. Interacts (via extracellular region) with MYO16. Interacts (via intracellular region) with ATP1B1. Interacts (via intracellular region) with SHMT2. Interacts (via intracellular region) with UFC1. Undergoes proteolysis by a metalloprotease and gives rise to a soluble form. As to expression, expressed in fetal and adult brain. Also expressed in kidney, specifically in podocytes of kidney glomeruli. Also expressed in skeletal muscle.

Its subcellular location is the cell membrane. The protein localises to the secreted. In terms of biological role, synaptic adhesion molecule required for the formation of target-specific synapses. Required for formation of target-specific synapses at hippocampal mossy fiber synapses. Required for formation of mossy fiber filopodia, the synaptic structures connecting dentate granule and GABA neurons. Probably acts as a homophilic adhesion molecule that promotes trans-cellular interactions and stabilize mossy fiber filipodia contact and subsequent synapse formation. Required for the coalescence of vomeronasal sensory neuron axons. May be involved in the hematopoietic supportive capacity of stroma cells; the secreted extracellular domain is directly responsible for supporting hematopoietic stem cells. The protein is Kin of IRRE-like protein 3 of Homo sapiens (Human).